The sequence spans 235 residues: MTHQKRLSIPRSWKAGKKGYKWVSTTRPGPHSQARSLPLGIIIRDILKLVDNSREGKRILSEGKVLVDGIPRKDLRFPVGLFDVITLPLVNETYRMFQDEKGRLALHKLNATNVNKLCRINNKTTLKGGKVQLNLNDGTNILGSNEYSTKDSLILSLPDKQIVKHLQFKVGNLAMVVGGQHSGEIGKITEIREVKSSRHNTVAISGETDFETIEDYVIVIGEDKPEIRLGGEVIE.

One can recognise an S4 RNA-binding domain in the interval 37 to 100 (LPLGIIIRDI…NETYRMFQDE (64 aa)).

It belongs to the eukaryotic ribosomal protein eS4 family.

In Methanosarcina barkeri (strain Fusaro / DSM 804), this protein is Small ribosomal subunit protein eS4.